A 159-amino-acid chain; its full sequence is MKIRVGFGFDVHQLVEGRELWLGGIRLEHSKGLLGHSDADVLLHTVCDALLGAANMRDIGYHFPDTAGEYKNIDSKILLKKTVELIATKGYRVGNIDATICAERPKLKAHIPLMQETMAAVMGIDAEDISIKATTTEKLGFTGREEGISAYATVLIEKD.

A divalent metal cation is bound by residues Asp10 and His12. Residues 10–12 (DVH) and 36–37 (HS) contribute to the 4-CDP-2-C-methyl-D-erythritol 2-phosphate site. Position 44 (His44) interacts with a divalent metal cation. 4-CDP-2-C-methyl-D-erythritol 2-phosphate-binding positions include 58 to 60 (DIG), 134 to 137 (TTTE), Phe141, and Arg144.

The protein belongs to the IspF family. Homotrimer. The cofactor is a divalent metal cation.

It catalyses the reaction 4-CDP-2-C-methyl-D-erythritol 2-phosphate = 2-C-methyl-D-erythritol 2,4-cyclic diphosphate + CMP. It functions in the pathway isoprenoid biosynthesis; isopentenyl diphosphate biosynthesis via DXP pathway; isopentenyl diphosphate from 1-deoxy-D-xylulose 5-phosphate: step 4/6. In terms of biological role, involved in the biosynthesis of isopentenyl diphosphate (IPP) and dimethylallyl diphosphate (DMAPP), two major building blocks of isoprenoid compounds. Catalyzes the conversion of 4-diphosphocytidyl-2-C-methyl-D-erythritol 2-phosphate (CDP-ME2P) to 2-C-methyl-D-erythritol 2,4-cyclodiphosphate (ME-CPP) with a corresponding release of cytidine 5-monophosphate (CMP). The chain is 2-C-methyl-D-erythritol 2,4-cyclodiphosphate synthase from Bacteroides thetaiotaomicron (strain ATCC 29148 / DSM 2079 / JCM 5827 / CCUG 10774 / NCTC 10582 / VPI-5482 / E50).